A 112-amino-acid chain; its full sequence is cAMP-regulated phosphoprotein 19 (112 aa).

The span at 1–11 (MSAESPEPASA) shows a compositional bias: low complexity. The segment at 1-49 (MSAESPEPASAEEQKEMEDKVLSPEKAEEAKLKARYPHLGQKPGGSDFL) is disordered. Basic and acidic residues predominate over residues 12-32 (EEQKEMEDKVLSPEKAEEAKL). 2 positions are modified to phosphoserine; by GWL: Ser-62 and Ser-104. A disordered region spans residues 72–112 (MKNKQLPTAAPDKTEVTGDHIPTPQDLPQRKPSLVASKLAG). Phosphoserine; by PKA is present on Ser-104.

It belongs to the endosulfine family. As to quaternary structure, interacts (when phosphorylated at Ser-62) with PPP2R2D. Phosphorylation at Ser-62 by MASTL/GWL during mitosis is essential for interaction with PPP2R2D (PR55-delta) and subsequent inactivation of PP2A.

The protein localises to the cytoplasm. Its function is as follows. Protein phosphatase inhibitor that specifically inhibits protein phosphatase 2A (PP2A) during mitosis. Inhibition of PP2A is enhanced when ARPP19 is phosphorylated. When phosphorylated at Ser-62 during mitosis, specifically interacts with PPP2R2D (PR55-delta) and inhibits its activity, leading to inactivation of PP2A, an essential condition to keep cyclin-B1-CDK1 activity high during M phase. This is cAMP-regulated phosphoprotein 19 (ARPP19) from Taeniopygia guttata (Zebra finch).